The chain runs to 258 residues: Cell division protein FtsQ (258 aa).

Residues 1–29 are Cytoplasmic-facing; the sequence is MAKNAPAPRGARRKPVKKVGVPLRERVAT. A helical membrane pass occupies residues 30 to 50; sequence AVPWMLVGSVAMVSLLAVIYL. Residues 51–258 are Periplasmic-facing; sequence PAALDGYPIR…MAVTWREQQS (208 aa). The POTRA domain maps to 57–127; the sequence is YPIRKVGVDG…DTVVLTVEER (71 aa).

The protein belongs to the FtsQ/DivIB family. FtsQ subfamily. Part of a complex composed of FtsB, FtsL and FtsQ.

It is found in the cell inner membrane. Functionally, essential cell division protein. May link together the upstream cell division proteins, which are predominantly cytoplasmic, with the downstream cell division proteins, which are predominantly periplasmic. May control correct divisome assembly. The protein is Cell division protein FtsQ of Alcanivorax borkumensis (strain ATCC 700651 / DSM 11573 / NCIMB 13689 / SK2).